The chain runs to 505 residues: Ent-kaurene oxidase 2 (505 aa).

Residues 3–23 (AFVPGGAGAAAAAVGGFVAAA) form a helical membrane-spanning segment. Cys449 serves as a coordination point for heme.

The protein belongs to the cytochrome P450 family. Requires heme as cofactor. Widely expressed.

The protein localises to the membrane. It carries out the reaction ent-kaur-16-ene + 3 reduced [NADPH--hemoprotein reductase] + 3 O2 = ent-kaur-16-en-19-oate + 3 oxidized [NADPH--hemoprotein reductase] + 4 H2O + 4 H(+). It functions in the pathway plant hormone biosynthesis; gibberellin biosynthesis. In terms of biological role, catalyzes three successive oxidations of the 4-methyl group of ent-kaurene giving kaurenoic acid, a key step in gibberellins (GAs) biosynthesis. GAs, which are involved many processes, including stem elongation, play a central role in plant development. This Oryza sativa subsp. japonica (Rice) protein is Ent-kaurene oxidase 2.